Here is a 516-residue protein sequence, read N- to C-terminus: MTDIHNHKILILDFGSQYTQLIARRVREVGVFCEIFPHDVAADFIKNYQAKGIILSGGPESVYDSDVKAPEIVFKLGIPVLGICYGMQTMVMQHGGEVKGADQSEFGKAIINILNSTNNIFSNMEHEQLVWMSHSDKVTQTGEHFEIIASSTNAPVAAVAHKSKPFFGVQFHPETTHTENGKQIIENFVVNICGCDTLWNIENIIENDIKEIKQKVGTDKVILGLSGGVDSSVVAAILHQAIGDQLTCIFVDTGLLRLNEGNQVMQVFAEHMDINVIRINAKNRFLDALRGICDPEQKRKIIGKLFVDIFDEEAAKIENAKWLAQGTIYSDVIESAGNNQSKAHVIKSHHNVGGLPKEMKLKLLEPLRELFKDEVRKLGLGLGLPYNMLYRHPFPGPGLGVRILGEIKKEYVETLQKADAIFTEELYKHNLYHDVSQAFGVFLPVKSVGVVGDQRRYEYVIALRAVVSIDFMTATWANLPYDFLSLVSNRIVNEVKQVSRVVYDVTGKPPGTIEWE.

Residues 8 to 198 (KILILDFGSQ…VVNICGCDTL (191 aa)) form the Glutamine amidotransferase type-1 domain. C84 functions as the Nucleophile in the catalytic mechanism. Residues H172 and E174 contribute to the active site. The GMPS ATP-PPase domain maps to 199–391 (WNIENIIEND…LGLPYNMLYR (193 aa)). 226 to 232 (SGGVDSS) contributes to the ATP binding site.

In terms of assembly, homodimer.

It carries out the reaction XMP + L-glutamine + ATP + H2O = GMP + L-glutamate + AMP + diphosphate + 2 H(+). Its pathway is purine metabolism; GMP biosynthesis; GMP from XMP (L-Gln route): step 1/1. Catalyzes the synthesis of GMP from XMP. The sequence is that of GMP synthase [glutamine-hydrolyzing] from Francisella tularensis subsp. novicida (strain U112).